Reading from the N-terminus, the 158-residue chain is Large ribosomal subunit protein uL16 (158 aa).

This sequence belongs to the universal ribosomal protein uL16 family. Part of the 50S ribosomal subunit.

In terms of biological role, binds 23S rRNA and is also seen to make contacts with the A and possibly P site tRNAs. The protein is Large ribosomal subunit protein uL16 of Synechococcus sp. (strain CC9605).